A 307-amino-acid polypeptide reads, in one-letter code: 4-hydroxy-3-methylbut-2-enyl diphosphate reductase (307 aa).

[4Fe-4S] cluster is bound at residue cysteine 13. 2 residues coordinate (2E)-4-hydroxy-3-methylbut-2-enyl diphosphate: histidine 42 and histidine 75. The dimethylallyl diphosphate site is built by histidine 42 and histidine 75. Histidine 42 and histidine 75 together coordinate isopentenyl diphosphate. Residue cysteine 97 participates in [4Fe-4S] cluster binding. Histidine 125 serves as a coordination point for (2E)-4-hydroxy-3-methylbut-2-enyl diphosphate. Residue histidine 125 coordinates dimethylallyl diphosphate. Histidine 125 provides a ligand contact to isopentenyl diphosphate. The active-site Proton donor is the glutamate 127. Residue threonine 165 participates in (2E)-4-hydroxy-3-methylbut-2-enyl diphosphate binding. Cysteine 195 contacts [4Fe-4S] cluster. (2E)-4-hydroxy-3-methylbut-2-enyl diphosphate-binding residues include serine 223, serine 224, asparagine 225, and serine 267. Positions 223, 224, 225, and 267 each coordinate dimethylallyl diphosphate. Isopentenyl diphosphate is bound by residues serine 223, serine 224, asparagine 225, and serine 267.

This sequence belongs to the IspH family. Requires [4Fe-4S] cluster as cofactor.

The enzyme catalyses isopentenyl diphosphate + 2 oxidized [2Fe-2S]-[ferredoxin] + H2O = (2E)-4-hydroxy-3-methylbut-2-enyl diphosphate + 2 reduced [2Fe-2S]-[ferredoxin] + 2 H(+). It carries out the reaction dimethylallyl diphosphate + 2 oxidized [2Fe-2S]-[ferredoxin] + H2O = (2E)-4-hydroxy-3-methylbut-2-enyl diphosphate + 2 reduced [2Fe-2S]-[ferredoxin] + 2 H(+). The protein operates within isoprenoid biosynthesis; dimethylallyl diphosphate biosynthesis; dimethylallyl diphosphate from (2E)-4-hydroxy-3-methylbutenyl diphosphate: step 1/1. It participates in isoprenoid biosynthesis; isopentenyl diphosphate biosynthesis via DXP pathway; isopentenyl diphosphate from 1-deoxy-D-xylulose 5-phosphate: step 6/6. In terms of biological role, catalyzes the conversion of 1-hydroxy-2-methyl-2-(E)-butenyl 4-diphosphate (HMBPP) into a mixture of isopentenyl diphosphate (IPP) and dimethylallyl diphosphate (DMAPP). Acts in the terminal step of the DOXP/MEP pathway for isoprenoid precursor biosynthesis. The chain is 4-hydroxy-3-methylbut-2-enyl diphosphate reductase from Chlamydia trachomatis serovar A (strain ATCC VR-571B / DSM 19440 / HAR-13).